The primary structure comprises 132 residues: MGSIGEPNRLLCWSIYVTKKPDQSEEDHHNHVSKVNAPMMIPFLKKYGIVRYTVKHNDAHSKPKQAALMAGQPEENVLAYDTVFEMIVKDIESIQTMQKDEEFLRTTIPDHFNFADMTRSKGSLTWIEEFTF.

Residues 21–117 (PDQSEEDHHN…IPDHFNFADM (97 aa)) enclose the EthD domain.

The protein belongs to the tpcK family.

The protein operates within mycotoxin biosynthesis. Its function is as follows. Dehydratase; part of the gene cluster that mediates the biosynthesis of cercosporin, a light-activated, non-host-selective toxin. The perylenequinone chromophore of cercosporin absorbs light energy to attain an electronically-activated triplet state and produces active oxygen species such as the hydroxyl radical, superoxide, hydrogen peroxide or singlet oxygen upon reaction with oxygen molecules. These reactive oxygen species cause damage to various cellular components including lipids, proteins and nucleic acids. The first step of cercosporin biosynthesis is performed by the polyketide synthase CTB1 which catalyzes the formation of nor-toralactone. The starter unit acyltransferase (SAT) domain of CTB1 initiates polyketide extension by the selective utilization of acetyl-CoA, which is elongated to the heptaketide in the beta-ketoacyl synthase (KS) domain by successive condensations with six malonyl units introduced by the malonyl acyltransferase (MAT) domain. The product template (PT) domain catalyzes C4-C9 and C2-C11 aldol cyclizations and dehydrations to a trihydroxynaphthalene, which is thought to be delivered to the thioesterase (TE) domain for product release. The bifunctional enzyme CTB3 then methylates nor-toralactone to toralactone before conducting an unusual oxidative aromatic ring opening. The O-methyltransferase CTB2 further methylates the nascent OH-6 of the CBT3 product, blocking further oxidation at this site before the reductase CTB6 reduces the 2-oxopropyl ketone at position C7, giving naphthalene. The FAD-dependent monooxygenase CTB5 in concert with the multicopper oxidase CTB12 are responsible for homodimerization of naphthalene with CTB7 installing the dioxepine moiety, finally producing cercosporin. The fasciclin domain-containing protein CTB11 might act with CTB5 and CTB12 whereas the roles of CTB9 and CTB10 have still to be elucidated. The chain is Dehydratase CTB10 from Cercospora beticola (Sugarbeet leaf spot fungus).